Here is a 517-residue protein sequence, read N- to C-terminus: MTDWVLHHKVGPLDMTTRYIFPLLPLPFLPHSESKRAVCAPRCSAMRTARQFVQVALALCCFADIAFGIEVNCSLYASGIGKDGTSWVACPRNLKPVCGTDGSTYSNECGICLYNREHGANVEKEYDGECRPKHVTIDCSPYLQVVRDGNTMVACPRILKPVCGSDSFTYDNECGICAYNAEHHTNISKLHDGECKLEIGSVDCSKYPSTVSKDGRTLVACPRILSPVCGTDGFTYDNECGICAHNAEQRTHVSKKHDGKCRQEIPEIDCDQYPTRKTTGGKLLVRCPRILLPVCGTDGFTYDNECGICAHNAQHGTEVKKSHDGRCKERSTPLDCTQYLSNTQNGEAITACPFILQEVCGTDGVTYSNDCSLCAHNIELGTSVAKKHDGRCREEVPELDCSKYKTSTLKDGRQVVACTMIYDPVCATNGVTYASECTLCAHNLEQRTNLGKRKNGRCEEDITKEHCREFQKVSPICTMEYVPHCGSDGVTYSNRCFFCNAYVQSNRTLNLVSMAAC.

7 consecutive Kazal-like domains span residues 67–132 (FGIE…ECRP), 133–197 (KHVT…ECKL), 198–263 (EIGS…KCRQ), 264–329 (EIPE…RCKE), 330–394 (RSTP…RCRE), 395–460 (EVPE…RCEE), and 461–517 (DITK…MAAC). Asparagine 72 is a glycosylation site (N-linked (GlcNAc...) asparagine). 21 cysteine pairs are disulfide-bonded: cysteine 73/cysteine 112, cysteine 90/cysteine 109, cysteine 98/cysteine 130, cysteine 139/cysteine 177, cysteine 155/cysteine 174, cysteine 163/cysteine 195, cysteine 204/cysteine 243, cysteine 221/cysteine 240, cysteine 229/cysteine 261, cysteine 270/cysteine 309, cysteine 287/cysteine 306, cysteine 295/cysteine 327, cysteine 336/cysteine 374, cysteine 352/cysteine 371, cysteine 360/cysteine 392, cysteine 401/cysteine 440, cysteine 418/cysteine 437, cysteine 426/cysteine 458, cysteine 467/cysteine 499, cysteine 477/cysteine 496, and cysteine 485/cysteine 517. An N-linked (GlcNAc...) asparagine glycan is attached at asparagine 186. Asparagine 506 carries N-linked (GlcNAc...) asparagine glycosylation.

Glycosylated. Expressed in oviduct (at protein level). Expressed in egg white (at protein level). Expressed in egg yolk plasma of non-fertilized eggs (at protein level). Expressed in the magnum of the oviduct (at protein level). Expressed in oviduct. Expressed in liver. Expressed in the cortico-medullary border region of the bursa of Fabricius by the bursal secretory dendritic-like cells. Highly expressed in the magnum of the oviduct, and at a lower level in uterus. Weakly expressed in white isthmus and very weakly in infundibulum. Not expressed in duodenum and kidney.

Its subcellular location is the secreted. Functionally, serine protease inhibitor involved in antimicrobial egg defense preventing contamination of table eggs (non-fertilized eggs) and protecting the chick embryo (fertilized eggs). Inhibits trypsin, chymotrypsin, elastase, subtilisin and a proteinase of fungus Aspergillus oryzae. Inhibits calcium-activated potassium channels KCNMA1 (bovine) and slo (Drosophila). Has antibacterial activity against B.thuringiensis LMSA 3.06.004, but not against S.aureus CIP 103 811, P.aeruginosa PAO1, B.cereus ATCC6464 or B.subtilis ATCC 6633. The chain is Ovoinhibitor from Gallus gallus (Chicken).